Here is a 297-residue protein sequence, read N- to C-terminus: PDZ domain-containing protein GIPC3 (297 aa).

The region spanning 97–177 is the PDZ domain; sequence EVEVTKTEDA…SQPFTLRLVQ (81 aa).

This sequence belongs to the GIPC family. In terms of tissue distribution, expressed in adult lung, brain and testis. In the inner ear, it is expressed in the inner and outer hair cells of the organ of Corti. Also expressed in cochlear spiral ganglion neurons.

Its function is as follows. Required for postnatal maturation of the hair bundle and long-term survival of hair cells and spiral ganglion. The sequence is that of PDZ domain-containing protein GIPC3 (Gipc3) from Mus musculus (Mouse).